An 80-amino-acid polypeptide reads, in one-letter code: Exodeoxyribonuclease 7 small subunit (80 aa).

Belongs to the XseB family. As to quaternary structure, heterooligomer composed of large and small subunits.

It is found in the cytoplasm. It carries out the reaction Exonucleolytic cleavage in either 5'- to 3'- or 3'- to 5'-direction to yield nucleoside 5'-phosphates.. Functionally, bidirectionally degrades single-stranded DNA into large acid-insoluble oligonucleotides, which are then degraded further into small acid-soluble oligonucleotides. The protein is Exodeoxyribonuclease 7 small subunit of Aliivibrio fischeri (strain ATCC 700601 / ES114) (Vibrio fischeri).